The sequence spans 1161 residues: Auxin response factor 19 (1161 aa).

A disordered region spans residues 1 to 20 (MMKQAQQQPPPPPASSAATT). A DNA-binding region (TF-B3) is located at residues 154–256 (FCKTLTASDT…QLLLGIRRAN (103 aa)). Residues 573–598 (NQMQQQHASSTQGQQPATSQPLLLPQ) are disordered. In terms of domain architecture, PB1 spans 1027–1111 (RTFTKVYKRG…KCIRILSPQE (85 aa)).

The protein belongs to the ARF family. As to quaternary structure, homodimers and heterodimers. Expressed in roots, culms, leaves and young panicles.

It localises to the nucleus. Functionally, auxin response factors (ARFs) are transcriptional factors that bind specifically to the DNA sequence 5'-TGTCTC-3' found in the auxin-responsive promoter elements (AuxREs). This Oryza sativa subsp. japonica (Rice) protein is Auxin response factor 19 (ARF19).